We begin with the raw amino-acid sequence, 207 residues long: ATP synthase subunit a (207 aa).

6 helical membrane passes run 3-23 (QHVIMALTVLIVVPVIFTIFA), 62-82 (LIASIGLFVFFGNLLGIIPGL), 88-108 (NLNTTMALALLVFFIYNFEGI), 119-139 (FLGPVPAMAPVFVIIELLSHL), 158-178 (LISVVLIMLVPFLIPMPVMLI), and 180-200 (LIAVFLQTYVFVVLTTVYIAG).

Belongs to the ATPase A chain family. As to quaternary structure, F-type ATPases have 2 components, CF(1) - the catalytic core - and CF(0) - the membrane proton channel. CF(1) has five subunits: alpha(3), beta(3), gamma(1), delta(1), epsilon(1). CF(0) has three main subunits: a(1), b(2) and c(9-12). The alpha and beta chains form an alternating ring which encloses part of the gamma chain. CF(1) is attached to CF(0) by a central stalk formed by the gamma and epsilon chains, while a peripheral stalk is formed by the delta and b chains.

The protein localises to the cell inner membrane. Its function is as follows. Key component of the proton channel; it plays a direct role in the translocation of protons across the membrane. In Sulfurihydrogenibium sp. (strain YO3AOP1), this protein is ATP synthase subunit a.